The following is a 397-amino-acid chain: Ubiquitin-like modifier-activating enzyme 5 (397 aa).

The ATP site is built by Gly77, Asp98, Lys121, Asn144, and Asn178. Positions 220 and 223 each coordinate Zn(2+). Cys244 serves as the catalytic Glycyl thioester intermediate. Zn(2+) contacts are provided by Cys297 and Cys302.

It belongs to the ubiquitin-activating E1 family. UBA5 subfamily.

E1-like enzyme which activates UFM1. This is Ubiquitin-like modifier-activating enzyme 5 from Culex quinquefasciatus (Southern house mosquito).